Reading from the N-terminus, the 245-residue chain is tRNA pseudouridine synthase A (245 aa).

Asp52 functions as the Nucleophile in the catalytic mechanism. Residue Tyr111 participates in substrate binding.

It belongs to the tRNA pseudouridine synthase TruA family. As to quaternary structure, homodimer.

The enzyme catalyses uridine(38/39/40) in tRNA = pseudouridine(38/39/40) in tRNA. In terms of biological role, formation of pseudouridine at positions 38, 39 and 40 in the anticodon stem and loop of transfer RNAs. This is tRNA pseudouridine synthase A from Ehrlichia canis (strain Jake).